We begin with the raw amino-acid sequence, 490 residues long: Probable glycine dehydrogenase (decarboxylating) subunit 2 (490 aa).

An N6-(pyridoxal phosphate)lysine modification is found at Lys-273.

This sequence belongs to the GcvP family. C-terminal subunit subfamily. The glycine cleavage system is composed of four proteins: P, T, L and H. In this organism, the P 'protein' is a heterodimer of two subunits. It depends on pyridoxal 5'-phosphate as a cofactor.

The enzyme catalyses N(6)-[(R)-lipoyl]-L-lysyl-[glycine-cleavage complex H protein] + glycine + H(+) = N(6)-[(R)-S(8)-aminomethyldihydrolipoyl]-L-lysyl-[glycine-cleavage complex H protein] + CO2. Its function is as follows. The glycine cleavage system catalyzes the degradation of glycine. The P protein binds the alpha-amino group of glycine through its pyridoxal phosphate cofactor; CO(2) is released and the remaining methylamine moiety is then transferred to the lipoamide cofactor of the H protein. The sequence is that of Probable glycine dehydrogenase (decarboxylating) subunit 2 from Staphylococcus aureus (strain Mu50 / ATCC 700699).